The sequence spans 276 residues: 2-dehydro-3-deoxyphosphooctonate aldolase (276 aa).

The protein belongs to the KdsA family.

It is found in the cytoplasm. It carries out the reaction D-arabinose 5-phosphate + phosphoenolpyruvate + H2O = 3-deoxy-alpha-D-manno-2-octulosonate-8-phosphate + phosphate. It functions in the pathway carbohydrate biosynthesis; 3-deoxy-D-manno-octulosonate biosynthesis; 3-deoxy-D-manno-octulosonate from D-ribulose 5-phosphate: step 2/3. Its pathway is bacterial outer membrane biogenesis; lipopolysaccharide biosynthesis. The sequence is that of 2-dehydro-3-deoxyphosphooctonate aldolase from Helicobacter pylori (strain HPAG1).